The chain runs to 255 residues: Small ribosomal subunit protein eS1 (255 aa).

Residues 1–18 show a composition bias toward basic residues; that stretch reads MAVGKNKRLSKGKKGLKK. A disordered region spans residues 1-28; sequence MAVGKNKRLSKGKKGLKKRTQDPFSRKD. Position 2 is an N-acetylalanine; partial (Ala-2). Basic and acidic residues predominate over residues 19–28; the sequence is RTQDPFSRKD.

This sequence belongs to the eukaryotic ribosomal protein eS1 family. As to quaternary structure, component of the small ribosomal subunit. Mature ribosomes consist of a small (40S) and a large (60S) subunit. The 40S subunit contains about 33 different proteins and 1 molecule of RNA (18S). The 60S subunit contains about 49 different proteins and 3 molecules of RNA (25S, 5.8S and 5S).

The protein localises to the cytoplasm. The sequence is that of Small ribosomal subunit protein eS1 from Paracoccidioides lutzii (strain ATCC MYA-826 / Pb01) (Paracoccidioides brasiliensis).